Here is a 140-residue protein sequence, read N- to C-terminus: Sex-regulated protein janus-B (140 aa).

Arg42 contributes to the substrate binding site. The Proton acceptor role is filled by His69. Position 110 to 112 (110 to 112) interacts with substrate; that stretch reads SRT.

It belongs to the janus family.

In terms of biological role, janA and janB regulate somatic sex differentiation. In Drosophila yakuba (Fruit fly), this protein is Sex-regulated protein janus-B (janB).